A 634-amino-acid polypeptide reads, in one-letter code: 1-deoxy-D-xylulose-5-phosphate synthase (634 aa).

Thiamine diphosphate is bound by residues His77 and 118–120; that span reads GHA. Asp149 serves as a coordination point for Mg(2+). Thiamine diphosphate-binding positions include 150–151, Asn178, Tyr289, and Glu371; that span reads AS. Position 178 (Asn178) interacts with Mg(2+).

Belongs to the transketolase family. DXPS subfamily. Homodimer. Mg(2+) is required as a cofactor. It depends on thiamine diphosphate as a cofactor.

It catalyses the reaction D-glyceraldehyde 3-phosphate + pyruvate + H(+) = 1-deoxy-D-xylulose 5-phosphate + CO2. The protein operates within metabolic intermediate biosynthesis; 1-deoxy-D-xylulose 5-phosphate biosynthesis; 1-deoxy-D-xylulose 5-phosphate from D-glyceraldehyde 3-phosphate and pyruvate: step 1/1. Functionally, catalyzes the acyloin condensation reaction between C atoms 2 and 3 of pyruvate and glyceraldehyde 3-phosphate to yield 1-deoxy-D-xylulose-5-phosphate (DXP). This Leptospira interrogans serogroup Icterohaemorrhagiae serovar copenhageni (strain Fiocruz L1-130) protein is 1-deoxy-D-xylulose-5-phosphate synthase.